We begin with the raw amino-acid sequence, 264 residues long: MIKYIGVFAFLVGGFCHDFETVISNQDPIVDGMRLVEGDMLFDDGPLFTERNAVKYDQQLWPNGEIVYEISPGLRQYEQIIREAMRTYEDNTCIKFRRRTNEADYVNIHVGDRCYSRVGKSFRGGPQPLSLGRGCTDFGTILHELGHSVGFDHEHSRADRDEFLIIHKENIKNGSEHNFDKLWENNTRTIGPFDYDSIMLYGAYAFSKDTRKFKTMEPVEPGLPMKSVIQKGKLSYYDIVKVNKLYKCPPVNPYPGGIRPYVNV.

A signal peptide spans 1-16 (MIKYIGVFAFLVGGFC). Positions 17–51 (HDFETVISNQDPIVDGMRLVEGDMLFDDGPLFTER) are excised as a propeptide. Residues 52-249 (NAVKYDQQLW…VKVNKLYKCP (198 aa)) form the Peptidase M12A domain. 2 disulfides stabilise this stretch: cysteine 93–cysteine 248 and cysteine 114–cysteine 135. Position 143 (histidine 143) interacts with Zn(2+). The active site involves glutamate 144. Residues histidine 147 and histidine 153 each contribute to the Zn(2+) site. 2 N-linked (GlcNAc...) asparagine glycosylation sites follow: asparagine 173 and asparagine 185.

As to quaternary structure, monomer. The cofactor is Zn(2+). In terms of tissue distribution, expressed by the venom gland.

It is found in the secreted. Inhibited by 1,10-phenanthroline. Zinc metalloprotease. Provoques deadhesion of endothelial cells from cell cultures, and also degradation of fibronectin, fibrinogen and gelatin in vitro. Its role in the venom is not fully understood but it might act as a spreading factor that facilitates diffusion of other venom toxins. Alternatively, it might be involved in the proteolytic processing of other venom toxins or it might play a role in extra-oral digestion of prey. This chain is Astacin-like metalloprotease toxin 1, found in Loxosceles intermedia (Brown spider).